Reading from the N-terminus, the 1794-residue chain is Protein TIC 214 (1794 aa).

Helical transmembrane passes span 19–39 (IINSVVVVGLYYGFLTTFSIG), 68–88 (FIAGQLMMFISIYYAPLHLAL), 91–111 (PHTITVLALPYLLFHFFWNNH), 133–153 (VFLNNLIFQLFNHFILPSSML), 176–196 (VGWLIGHILFMKWVGLVLVWI), and 227–247 (IFSILLFITCVYYLGRIPSPI).

It belongs to the TIC214 family. As to quaternary structure, part of the Tic complex.

It localises to the plastid. The protein resides in the chloroplast inner membrane. Its function is as follows. Involved in protein precursor import into chloroplasts. May be part of an intermediate translocation complex acting as a protein-conducting channel at the inner envelope. In Olimarabidopsis pumila (Dwarf rocket), this protein is Protein TIC 214.